The chain runs to 296 residues: m7GpppN-mRNA hydrolase NUDT17 (296 aa).

Positions 90–236 (GRGVDVGVAV…DSGSPCGPLP (147 aa)) constitute a Nudix hydrolase domain. Residues 129 to 150 (GHVELGEQLLEAGLRELQEETG) carry the Nudix box motif. 2 residues coordinate Mg(2+): Glu-144 and Glu-148.

Belongs to the Nudix hydrolase family. Mg(2+) serves as cofactor. Mn(2+) is required as a cofactor.

The enzyme catalyses a 5'-end (N(7)-methyl 5'-triphosphoguanosine)-ribonucleoside in mRNA + H2O = N(7)-methyl-GDP + a 5'-end phospho-ribonucleoside in mRNA + 2 H(+). Its function is as follows. Acts as a decapping enzyme capable of hydrolyzing monomethylated capped RNAs (in vitro). Hydrolyzes monomethylated capped RNA after alpha and beta phosphates to form N(7)-methyl-GDP. Shows low activity towards unmethylated capped RNA. The sequence is that of m7GpppN-mRNA hydrolase NUDT17 (nudt17) from Xenopus laevis (African clawed frog).